The following is a 196-amino-acid chain: tRNA(Phe) 7-((3-amino-3-carboxypropyl)-4-demethylwyosine(37)-N(4))-methyltransferase 1 (196 aa).

Belongs to the TYW3 family.

It catalyses the reaction 4-demethyl-7-[(3S)-3-amino-3-carboxypropyl]wyosine(37) in tRNA(Phe) + S-adenosyl-L-methionine = 7-[(3S)-3-amino-3-carboxypropyl]wyosine(37) in tRNA(Phe) + S-adenosyl-L-homocysteine + H(+). Functionally, S-adenosyl-L-methionine-dependent methyltransferase that acts as a component of the wyosine derivatives biosynthesis pathway. Probably methylates N-4 position of wybutosine-86 to produce wybutosine-72. The polypeptide is tRNA(Phe) 7-((3-amino-3-carboxypropyl)-4-demethylwyosine(37)-N(4))-methyltransferase 1 (Pyrococcus horikoshii (strain ATCC 700860 / DSM 12428 / JCM 9974 / NBRC 100139 / OT-3)).